The chain runs to 261 residues: Acyl-[acyl-carrier-protein]--UDP-N-acetylglucosamine O-acyltransferase (261 aa).

This sequence belongs to the transferase hexapeptide repeat family. LpxA subfamily. In terms of assembly, homotrimer.

It localises to the cytoplasm. The enzyme catalyses a (3R)-hydroxyacyl-[ACP] + UDP-N-acetyl-alpha-D-glucosamine = a UDP-3-O-[(3R)-3-hydroxyacyl]-N-acetyl-alpha-D-glucosamine + holo-[ACP]. It functions in the pathway glycolipid biosynthesis; lipid IV(A) biosynthesis; lipid IV(A) from (3R)-3-hydroxytetradecanoyl-[acyl-carrier-protein] and UDP-N-acetyl-alpha-D-glucosamine: step 1/6. Its function is as follows. Involved in the biosynthesis of lipid A, a phosphorylated glycolipid that anchors the lipopolysaccharide to the outer membrane of the cell. The protein is Acyl-[acyl-carrier-protein]--UDP-N-acetylglucosamine O-acyltransferase of Trichlorobacter lovleyi (strain ATCC BAA-1151 / DSM 17278 / SZ) (Geobacter lovleyi).